We begin with the raw amino-acid sequence, 501 residues long: Probable cytosol aminopeptidase (501 aa).

Mn(2+) is bound by residues K267 and D272. K279 is an active-site residue. D290, D349, and E351 together coordinate Mn(2+). Residue R353 is part of the active site.

It belongs to the peptidase M17 family. Mn(2+) is required as a cofactor.

Its subcellular location is the cytoplasm. The catalysed reaction is Release of an N-terminal amino acid, Xaa-|-Yaa-, in which Xaa is preferably Leu, but may be other amino acids including Pro although not Arg or Lys, and Yaa may be Pro. Amino acid amides and methyl esters are also readily hydrolyzed, but rates on arylamides are exceedingly low.. It carries out the reaction Release of an N-terminal amino acid, preferentially leucine, but not glutamic or aspartic acids.. Its function is as follows. Presumably involved in the processing and regular turnover of intracellular proteins. Catalyzes the removal of unsubstituted N-terminal amino acids from various peptides. The polypeptide is Probable cytosol aminopeptidase (Desulfovibrio desulfuricans (strain ATCC 27774 / DSM 6949 / MB)).